The chain runs to 525 residues: GMP synthase [glutamine-hydrolyzing] (525 aa).

The Glutamine amidotransferase type-1 domain maps to 9 to 207 (RILILDFGSQ…VRDICQCEAL (199 aa)). Residue Cys-86 is the Nucleophile of the active site. Active-site residues include His-181 and Glu-183. In terms of domain architecture, GMPS ATP-PPase spans 208 to 400 (WTPAKIIDDA…LGLPYDMLYR (193 aa)). ATP is bound at residue 235–241 (SGGVDSS).

In terms of assembly, homodimer.

It carries out the reaction XMP + L-glutamine + ATP + H2O = GMP + L-glutamate + AMP + diphosphate + 2 H(+). It functions in the pathway purine metabolism; GMP biosynthesis; GMP from XMP (L-Gln route): step 1/1. Catalyzes the synthesis of GMP from XMP. In Salmonella arizonae (strain ATCC BAA-731 / CDC346-86 / RSK2980), this protein is GMP synthase [glutamine-hydrolyzing].